A 354-amino-acid polypeptide reads, in one-letter code: Uroporphyrinogen decarboxylase (354 aa).

Substrate is bound by residues 30-34 (RQAGR), D79, Y154, S209, and H333.

Belongs to the uroporphyrinogen decarboxylase family. As to quaternary structure, homodimer.

Its subcellular location is the cytoplasm. The enzyme catalyses uroporphyrinogen III + 4 H(+) = coproporphyrinogen III + 4 CO2. Its pathway is porphyrin-containing compound metabolism; protoporphyrin-IX biosynthesis; coproporphyrinogen-III from 5-aminolevulinate: step 4/4. Catalyzes the decarboxylation of four acetate groups of uroporphyrinogen-III to yield coproporphyrinogen-III. This Mycobacterium sp. (strain JLS) protein is Uroporphyrinogen decarboxylase.